The sequence spans 577 residues: Serine/threonine-protein kinase AGC1-5 (577 aa).

Positions 1–12 (MDLASKKNTANV) are enriched in polar residues. The disordered stretch occupies residues 1-151 (MDLASKKNTA…DYAYGDNLVG (151 aa)). A compositionally biased stretch (basic and acidic residues) spans 44 to 55 (PHFDPKKMDPLV). Composition is skewed to polar residues over residues 69 to 87 (TRGTNSEGDLKHNTYSSDG) and 110 to 120 (LTTSETYSPSA). Residues 185–509 (FRLLKRLGYG…ATEIKQHPFF (325 aa)) form the Protein kinase domain. ATP-binding positions include 191–199 (LGYGDIGSV) and lysine 214. Aspartate 310 acts as the Proton acceptor in catalysis. The 68-residue stretch at 510 to 577 (EGVNWALVRS…DTAYIDFEYF (68 aa)) folds into the AGC-kinase C-terminal domain.

It belongs to the protein kinase superfamily. AGC Ser/Thr protein kinase family. In terms of assembly, interacts with PDPK1/PDK1. Post-translationally, autophosphorylated and phosphorylated by PDPK1/PDK1. In terms of tissue distribution, specifically expressed in pollen grains.

It catalyses the reaction L-seryl-[protein] + ATP = O-phospho-L-seryl-[protein] + ADP + H(+). The catalysed reaction is L-threonyl-[protein] + ATP = O-phospho-L-threonyl-[protein] + ADP + H(+). Activated by PDPK1/PDK1. Functionally, functions redudantly with AGC1-7 as signaling component in the pollen tube. Required for polarized growth of pollen tubes. This chain is Serine/threonine-protein kinase AGC1-5, found in Arabidopsis thaliana (Mouse-ear cress).